The primary structure comprises 339 residues: Phospho-N-acetylmuramoyl-pentapeptide-transferase (339 aa).

The next 10 helical transmembrane spans lie at 4–24 (TTIIAGIISFILTILAMPFFI), 53–73 (MGGTVFLLVAALVTFICAFVL), 80–100 (AFGATLAILFIVLIYGTIGFL), 113–133 (GLTAWQKMALQLIGGLVFYLV), 145–165 (LFGFPLHLGVFYIIFILFWVV), 176–196 (GIDGLASISVVISLLTYSVIA), 202–222 (FDVLLIIISMVGALLGFFVYN), 228–248 (VFMGDVGSLALGAMLAAISIT), 253–273 (WTLLIIGIVYVLETASVMLQV), and 318–338 (VDFFLWSIGLLGSLLILAILY).

This sequence belongs to the glycosyltransferase 4 family. MraY subfamily. Mg(2+) is required as a cofactor.

It localises to the cell membrane. The enzyme catalyses UDP-N-acetyl-alpha-D-muramoyl-L-alanyl-gamma-D-glutamyl-L-lysyl-D-alanyl-D-alanine + di-trans,octa-cis-undecaprenyl phosphate = Mur2Ac(oyl-L-Ala-gamma-D-Glu-L-Lys-D-Ala-D-Ala)-di-trans,octa-cis-undecaprenyl diphosphate + UMP. It functions in the pathway cell wall biogenesis; peptidoglycan biosynthesis. Catalyzes the initial step of the lipid cycle reactions in the biosynthesis of the cell wall peptidoglycan: transfers peptidoglycan precursor phospho-MurNAc-pentapeptide from UDP-MurNAc-pentapeptide onto the lipid carrier undecaprenyl phosphate, yielding undecaprenyl-pyrophosphoryl-MurNAc-pentapeptide, known as lipid I. The protein is Phospho-N-acetylmuramoyl-pentapeptide-transferase of Streptococcus mutans serotype c (strain ATCC 700610 / UA159).